The sequence spans 572 residues: Arginine--tRNA ligase (572 aa).

A 'HIGH' region motif is present at residues 122 to 132 (PNLAKEMHVGH).

The protein belongs to the class-I aminoacyl-tRNA synthetase family. In terms of assembly, monomer.

It is found in the cytoplasm. It catalyses the reaction tRNA(Arg) + L-arginine + ATP = L-arginyl-tRNA(Arg) + AMP + diphosphate. This chain is Arginine--tRNA ligase, found in Neisseria meningitidis serogroup A / serotype 4A (strain DSM 15465 / Z2491).